Consider the following 46-residue polypeptide: Iota-conotoxin RXIA (46 aa).

Pro2 and Pro11 each carry 4-hydroxyproline; partial. 4 cysteine pairs are disulfide-bonded: Cys5-Cys19, Cys12-Cys22, Cys18-Cys27, and Cys21-Cys38. A 4-hydroxyproline modification is found at Pro29. The residue at position 44 (Phe44) is a D-phenylalanine.

This sequence belongs to the conotoxin I1 superfamily. In terms of processing, the natural D-Phe-44 form of the peptide is more potent than the L-Phe-44 form. Expressed by the venom duct.

It localises to the secreted. In terms of biological role, iota-conotoxins bind to voltage-gated sodium channels and act as agonists by shifting the voltage-dependence of activation to more hyperpolarized levels. This toxin acts on Nav1.6/SCN8A &gt; Nav1.2/SCN2A &gt; Nav1.7/SCN9A sodium channels. Produces general excitatory symptoms upon intracorporeal injection and repetitive action potentials in the frog cutaneous pectoris muscle. Natural peptide (with D-Phe) is active on nerve, but not on muscle. Synthetic peptide (with L-Phe) is not active on both nerve and muscle. In Conus radiatus (Rayed cone), this protein is Iota-conotoxin RXIA.